An 852-amino-acid polypeptide reads, in one-letter code: Bifunctional heparan sulfate N-deacetylase/N-sulfotransferase 1 (852 aa).

Residues 1–13 (MIITPYLNRKITR) lie on the Cytoplasmic side of the membrane. Residues 14–34 (PLKWILALIFLYLIYICLFSN) form a helical; Signal-anchor for type II membrane protein membrane-spanning segment. Positions 34 to 574 (NNSKPPKPRK…PRHHAILPPS (541 aa)) are heparan sulfate N-deacetylase 1. The Lumenal segment spans residues 35-852 (NSKPPKPRKK…WLEESVRIRA (818 aa)). Residues asparagine 50, asparagine 72, asparagine 261, asparagine 328, asparagine 377, asparagine 428, and asparagine 576 are each glycosylated (N-linked (GlcNAc...) asparagine). Residues 575-852 (INCTKKSLPD…WLEESVRIRA (278 aa)) form a heparan sulfate N-sulfotransferase 1 region. Lysine 592 acts as the For sulfotransferase activity in catalysis. 3'-phosphoadenylyl sulfate is bound at residue 592-596 (KTGST). A glycan (N-linked (GlcNAc...) asparagine) is linked at asparagine 607. 3'-phosphoadenylyl sulfate is bound at residue serine 686. Residue asparagine 712 is glycosylated (N-linked (GlcNAc...) asparagine). Cysteine 789 and cysteine 798 are joined by a disulfide. 803–807 (KGRKY) lines the 3'-phosphoadenylyl sulfate pocket.

Belongs to the sulfotransferase 1 family. NDST subfamily. As to quaternary structure, monomer. As to expression, present in some specific neurons in head and tail regions and muscles.

The protein localises to the golgi apparatus membrane. The enzyme catalyses alpha-D-glucosaminyl-[heparan sulfate](n) + 3'-phosphoadenylyl sulfate = N-sulfo-alpha-D-glucosaminyl-[heparan sulfate](n) + adenosine 3',5'-bisphosphate + 2 H(+). Its pathway is glycan metabolism; heparan sulfate biosynthesis. It participates in glycan metabolism; heparin biosynthesis. Functionally, essential bifunctional enzyme that catalyzes both the N-deacetylation and the N-sulfation of glucosamine (GlcNAc) of the glycosaminoglycan in heparan sulfate. Modifies the GlcNAc-GlcA disaccharide repeating sugar backbone to make N-sulfated heparosan, a prerequisite substrate for later modifications in heparin biosynthesis. The sequence is that of Bifunctional heparan sulfate N-deacetylase/N-sulfotransferase 1 (hst-1) from Caenorhabditis elegans.